Consider the following 64-residue polypeptide: Alpha-conotoxin-like Lp1.8 (64 aa).

Positions 1–21 (MGMRMMFTMFLLVVLTTTVVS) are cleaved as a signal peptide. Positions 22-41 (FNSDRESNHENRRTSNQITR) are excised as a propeptide. 2 disulfide bridges follow: Cys-47–Cys-53 and Cys-48–Cys-61. The interval 49 to 51 (KDP) is lacks the Ser-Xaa-Pro motif that is crucial for potent interaction with nAChR.

This sequence belongs to the conotoxin A superfamily. As to expression, expressed by the venom duct.

It localises to the secreted. Alpha-conotoxins act on postsynaptic membranes, they bind to the nicotinic acetylcholine receptors (nAChR) and thus inhibit them. Has possibly a distinct nAChR binding mode from other alpha-conotoxins, due to a different three residue motif (Lys-Xaa-Pro instead of the conserved Ser-Xaa-Pro motif). The chain is Alpha-conotoxin-like Lp1.8 from Conus leopardus (Leopard cone).